The following is a 497-amino-acid chain: Probable cytosol aminopeptidase (497 aa).

Residues Lys-265 and Asp-270 each contribute to the Mn(2+) site. Lys-277 is a catalytic residue. Asp-288, Asp-347, and Glu-349 together coordinate Mn(2+). Arg-351 is an active-site residue.

It belongs to the peptidase M17 family. Requires Mn(2+) as cofactor.

Its subcellular location is the cytoplasm. The enzyme catalyses Release of an N-terminal amino acid, Xaa-|-Yaa-, in which Xaa is preferably Leu, but may be other amino acids including Pro although not Arg or Lys, and Yaa may be Pro. Amino acid amides and methyl esters are also readily hydrolyzed, but rates on arylamides are exceedingly low.. It catalyses the reaction Release of an N-terminal amino acid, preferentially leucine, but not glutamic or aspartic acids.. In terms of biological role, presumably involved in the processing and regular turnover of intracellular proteins. Catalyzes the removal of unsubstituted N-terminal amino acids from various peptides. The protein is Probable cytosol aminopeptidase of Geobacillus thermodenitrificans (strain NG80-2).